Here is a 229-residue protein sequence, read N- to C-terminus: Sec-independent protein translocase protein TatB (229 aa).

A helical transmembrane segment spans residues Met-1–Gly-21. The disordered stretch occupies residues Glu-90–Tyr-131. A compositionally biased stretch (polar residues) spans Pro-108–Tyr-131.

The protein belongs to the TatB family. The Tat system comprises two distinct complexes: a TatABC complex, containing multiple copies of TatA, TatB and TatC subunits, and a separate TatA complex, containing only TatA subunits. Substrates initially bind to the TatABC complex, which probably triggers association of the separate TatA complex to form the active translocon.

The protein resides in the cell inner membrane. Part of the twin-arginine translocation (Tat) system that transports large folded proteins containing a characteristic twin-arginine motif in their signal peptide across membranes. Together with TatC, TatB is part of a receptor directly interacting with Tat signal peptides. TatB may form an oligomeric binding site that transiently accommodates folded Tat precursor proteins before their translocation. This is Sec-independent protein translocase protein TatB from Psychrobacter arcticus (strain DSM 17307 / VKM B-2377 / 273-4).